The following is a 465-amino-acid chain: Glutamate--tRNA ligase (465 aa).

The 'HIGH' region motif lies at 11-21 (PSPTGYLHIGG). Residues 243 to 247 (KLSKR) carry the 'KMSKS' region motif. Position 246 (Lys246) interacts with ATP.

This sequence belongs to the class-I aminoacyl-tRNA synthetase family. Glutamate--tRNA ligase type 1 subfamily. Monomer.

The protein localises to the cytoplasm. It catalyses the reaction tRNA(Glu) + L-glutamate + ATP = L-glutamyl-tRNA(Glu) + AMP + diphosphate. Its function is as follows. Catalyzes the attachment of glutamate to tRNA(Glu) in a two-step reaction: glutamate is first activated by ATP to form Glu-AMP and then transferred to the acceptor end of tRNA(Glu). This is Glutamate--tRNA ligase from Aromatoleum aromaticum (strain DSM 19018 / LMG 30748 / EbN1) (Azoarcus sp. (strain EbN1)).